The sequence spans 216 residues: Adenylate kinase (216 aa).

Residue 10–15 (GSGKGT) coordinates ATP. The interval 30 to 59 (STGEILRKEIKKNKKTKKYIKKTINKGKLI) is NMP. Residues threonine 31, arginine 36, 57–59 (KLI), 85–88 (GFPR), and glutamine 92 each bind AMP. Residues 121–158 (GRLIHASSGRTYHKIFNPPKIKNKDDITQEKLCSRNDD) form an LID region. Residues arginine 122 and 131 to 132 (TY) contribute to the ATP site. Arginine 155 and arginine 166 together coordinate AMP. Glutamine 196 contributes to the ATP binding site.

Belongs to the adenylate kinase family. Monomer.

The protein localises to the cytoplasm. The catalysed reaction is AMP + ATP = 2 ADP. It functions in the pathway purine metabolism; AMP biosynthesis via salvage pathway; AMP from ADP: step 1/1. Functionally, catalyzes the reversible transfer of the terminal phosphate group between ATP and AMP. Plays an important role in cellular energy homeostasis and in adenine nucleotide metabolism. In Buchnera aphidicola subsp. Cinara cedri (strain Cc), this protein is Adenylate kinase.